The chain runs to 381 residues: Bifunctional enzyme Fae/Hps (381 aa).

The formaldehyde-activating enzyme stretch occupies residues 1-150 (MIKFGEAVLG…KEKYRALHPL (150 aa)). Positions 151 to 381 (VGFRDVRLEY…DEDEDIGEEL (231 aa)) are 3-hexulose-6-phosphate synthase.

It in the N-terminal section; belongs to the formaldehyde-activating enzyme family. This sequence in the C-terminal section; belongs to the HPS/KGPDC family. HPS subfamily.

It catalyses the reaction 5,6,7,8-tetrahydromethanopterin + formaldehyde = 5,10-methylenetetrahydromethanopterin + H2O. It carries out the reaction D-ribulose 5-phosphate + formaldehyde = D-arabino-hex-3-ulose 6-phosphate. It participates in carbohydrate biosynthesis; D-ribose 5-phosphate biosynthesis. Its function is as follows. Catalyzes the condensation of formaldehyde with tetrahydromethanopterin (H(4)MPT) to 5,10-methylenetetrahydromethanopterin. Functionally, catalyzes the reversible formation of ribulose-5-phosphate and formaldehyde from 3-hexulose-6-phosphate. This Methanocaldococcus jannaschii (strain ATCC 43067 / DSM 2661 / JAL-1 / JCM 10045 / NBRC 100440) (Methanococcus jannaschii) protein is Bifunctional enzyme Fae/Hps.